We begin with the raw amino-acid sequence, 254 residues long: Flagellar L-ring protein 1 (254 aa).

A signal peptide spans 1-26 (MSPFSSAFRPRRIAISALLLAIGALA).

This sequence belongs to the FlgH family. The basal body constitutes a major portion of the flagellar organelle and consists of four rings (L,P,S, and M) mounted on a central rod.

It localises to the cell outer membrane. It is found in the bacterial flagellum basal body. Its function is as follows. Assembles around the rod to form the L-ring and probably protects the motor/basal body from shearing forces during rotation. The chain is Flagellar L-ring protein 1 (flgH1) from Bradyrhizobium diazoefficiens (strain JCM 10833 / BCRC 13528 / IAM 13628 / NBRC 14792 / USDA 110).